The sequence spans 903 residues: DNA mismatch repair protein MutS (903 aa).

655-662 contributes to the ATP binding site; that stretch reads GPNMAGKS.

This sequence belongs to the DNA mismatch repair MutS family.

This protein is involved in the repair of mismatches in DNA. It is possible that it carries out the mismatch recognition step. This protein has a weak ATPase activity. In Caulobacter vibrioides (strain ATCC 19089 / CIP 103742 / CB 15) (Caulobacter crescentus), this protein is DNA mismatch repair protein MutS.